Here is a 473-residue protein sequence, read N- to C-terminus: Ras-GEF domain-containing family member 1B (473 aa).

Residues 34–161 (HDNNLLSGSL…NVQQMMQCLI (128 aa)) form the N-terminal Ras-GEF domain. The Ras-GEF domain occupies 205–453 (DPYTLAQQLT…YLASYESEGP (249 aa)).

As to quaternary structure, interacts with CCDC124 during cytokinesis. Interacts with Ras family proteins. In terms of tissue distribution, constitutively expressed in brain, intestine and testis. Low constitutive expression, if any, in heart, lung, lymph nodes and thymus. Up-regulated in heart, kidney, liver, lymph nodes, spleen and thymus at day 20 after infection with Trypanosoma cruzi. Not detected in muscle.

It localises to the early endosome. The protein localises to the late endosome. The protein resides in the midbody. Functionally, guanine nucleotide exchange factor (GEF) with specificity for RAP2A, it doesn't seems to activate other Ras family proteins (in vitro). This Mus musculus (Mouse) protein is Ras-GEF domain-containing family member 1B (Rasgef1b).